A 712-amino-acid polypeptide reads, in one-letter code: Ribosomal RNA large subunit methyltransferase K/L (712 aa).

One can recognise a THUMP domain in the interval 46–157; that stretch reads GAYQALLHSR…RENMVVSLDL (112 aa).

Belongs to the methyltransferase superfamily. RlmKL family.

It localises to the cytoplasm. It catalyses the reaction guanosine(2445) in 23S rRNA + S-adenosyl-L-methionine = N(2)-methylguanosine(2445) in 23S rRNA + S-adenosyl-L-homocysteine + H(+). The catalysed reaction is guanosine(2069) in 23S rRNA + S-adenosyl-L-methionine = N(2)-methylguanosine(2069) in 23S rRNA + S-adenosyl-L-homocysteine + H(+). Functionally, specifically methylates the guanine in position 2445 (m2G2445) and the guanine in position 2069 (m7G2069) of 23S rRNA. This is Ribosomal RNA large subunit methyltransferase K/L from Actinobacillus pleuropneumoniae serotype 7 (strain AP76).